Consider the following 463-residue polypeptide: tRNA-2-methylthio-N(6)-dimethylallyladenosine synthase (463 aa).

The region spanning 5–125 (RKLHIKSYGC…LPQLLAKAEQ (121 aa)) is the MTTase N-terminal domain. Residues Cys-14, Cys-50, Cys-88, Cys-166, Cys-170, and Cys-173 each coordinate [4Fe-4S] cluster. Residues 152–384 (RARGISAFVT…QQLIDQQQSA (233 aa)) enclose the Radical SAM core domain. In terms of domain architecture, TRAM spans 387–449 (KAAIGRTVEV…RYSLLGELAS (63 aa)).

This sequence belongs to the methylthiotransferase family. MiaB subfamily. Monomer. Requires [4Fe-4S] cluster as cofactor.

It localises to the cytoplasm. It carries out the reaction N(6)-dimethylallyladenosine(37) in tRNA + (sulfur carrier)-SH + AH2 + 2 S-adenosyl-L-methionine = 2-methylsulfanyl-N(6)-dimethylallyladenosine(37) in tRNA + (sulfur carrier)-H + 5'-deoxyadenosine + L-methionine + A + S-adenosyl-L-homocysteine + 2 H(+). Catalyzes the methylthiolation of N6-(dimethylallyl)adenosine (i(6)A), leading to the formation of 2-methylthio-N6-(dimethylallyl)adenosine (ms(2)i(6)A) at position 37 in tRNAs that read codons beginning with uridine. In Rhodopseudomonas palustris (strain TIE-1), this protein is tRNA-2-methylthio-N(6)-dimethylallyladenosine synthase.